Here is a 207-residue protein sequence, read N- to C-terminus: Small ribosomal subunit protein uS4c (207 aa).

Residues methionine 92 to glutamate 156 enclose the S4 RNA-binding domain.

The protein belongs to the universal ribosomal protein uS4 family. Part of the 30S ribosomal subunit. Contacts protein S5. The interaction surface between S4 and S5 is involved in control of translational fidelity.

It is found in the plastid. Its subcellular location is the chloroplast. In terms of biological role, one of the primary rRNA binding proteins, it binds directly to 16S rRNA where it nucleates assembly of the body of the 30S subunit. Functionally, with S5 and S12 plays an important role in translational accuracy. This Equisetum pratense (Meadow horsetail) protein is Small ribosomal subunit protein uS4c (rps4).